The chain runs to 166 residues: ATP synthase subunit b (166 aa).

The helical transmembrane segment at 10–30 (LLFWMIVSFGIVFVILSKYGF) threads the bilayer.

This sequence belongs to the ATPase B chain family. As to quaternary structure, F-type ATPases have 2 components, F(1) - the catalytic core - and F(0) - the membrane proton channel. F(1) has five subunits: alpha(3), beta(3), gamma(1), delta(1), epsilon(1). F(0) has three main subunits: a(1), b(2) and c(10-14). The alpha and beta chains form an alternating ring which encloses part of the gamma chain. F(1) is attached to F(0) by a central stalk formed by the gamma and epsilon chains, while a peripheral stalk is formed by the delta and b chains.

It localises to the cell inner membrane. Functionally, f(1)F(0) ATP synthase produces ATP from ADP in the presence of a proton or sodium gradient. F-type ATPases consist of two structural domains, F(1) containing the extramembraneous catalytic core and F(0) containing the membrane proton channel, linked together by a central stalk and a peripheral stalk. During catalysis, ATP synthesis in the catalytic domain of F(1) is coupled via a rotary mechanism of the central stalk subunits to proton translocation. Component of the F(0) channel, it forms part of the peripheral stalk, linking F(1) to F(0). The polypeptide is ATP synthase subunit b (Parabacteroides distasonis (strain ATCC 8503 / DSM 20701 / CIP 104284 / JCM 5825 / NCTC 11152)).